The primary structure comprises 194 residues: MTSFTVIGHTACTDASFPLDDLPGKGGRMDLLCRAVASSLFLSHGIREDTTCDIMLLGQPHPGRIIRFDGSALRSLSPDERNIASSIKRALAIPAGKTFREAGPGLLTRKGTLADQLSEKHYAVLDESGVDIRKVATEELPDAFLLSDNRNFSDDEMELIRDIPKYSLGPAIVHADHAIVLILNEIDRRRSGWI.

Leu125 contributes to the S-adenosyl-L-methionine binding site.

This sequence belongs to the methyltransferase superfamily. TrmY family. Homodimer.

The protein resides in the cytoplasm. The enzyme catalyses pseudouridine(54) in tRNA + S-adenosyl-L-methionine = N(1)-methylpseudouridine(54) in tRNA + S-adenosyl-L-homocysteine + H(+). Specifically catalyzes the N1-methylation of pseudouridine at position 54 (Psi54) in tRNAs. The protein is tRNA (pseudouridine(54)-N(1))-methyltransferase of Methanospirillum hungatei JF-1 (strain ATCC 27890 / DSM 864 / NBRC 100397 / JF-1).